The sequence spans 465 residues: Catalase cnsD (465 aa).

Histidine 39 is a catalytic residue. Tyrosine 331 contributes to the heme binding site.

Belongs to the catalase family. Heme is required as a cofactor.

It participates in alkaloid biosynthesis. In terms of biological role, catalase; part of the gene cluster that mediates the biosynthesis of communesins, a prominent class of indole alkaloids with great potential as pharmaceuticals. Communesins are biosynthesized by the coupling of tryptamine and aurantioclavine, two building blocks derived from L-tryptophan. The L-tryptophan decarboxylase cnsB converts L-tryptophan to tryptamine, whereas the tryptophan dimethylallyltransferase cnsF converts L-tryptophan to 4-dimethylallyl tryptophan which is further transformed to aurantioclavine by the aurantioclavine synthase cnsA, probably aided by the catalase cnsD. The cytochrome P450 monooxygenase cnsC catalyzes the heterodimeric coupling between the two different indole moieties, tryptamine and aurantioclavine, to construct vicinal quaternary stereocenters and yield the heptacyclic communesin scaffold. The O-methyltransferase cnsE then methylates the communesin scaffold to produce communesin K, the simplest characterized communesin that contains the heptacyclic core. The dioxygenase cnsJ converts communesin K into communesin I. Acylation to introduce the hexadienyl group at position N16 of communesin I by the acyltransferase cnsK leads to the production of communesin B. The hexadienyl group is produced by the highly reducing polyketide synthase cnsI, before being hydrolytically removed from cnsI by the serine hydrolase cnsH, converted into hexadienyl-CoA by the CoA ligase cnsG, and then transferred to communesin I by cnsK. Surprisingly, cnsK may also be a promiscuous acyltransferase that can tolerate a range of acyl groups, including acetyl-, propionyl-, and butyryl-CoA, which lead to communesins A, G and H respectively. The roles of the alpha-ketoglutarate-dependent dioxygenases cnsM and cnsP have still to be determined. This chain is Catalase cnsD, found in Penicillium expansum (Blue mold rot fungus).